A 300-amino-acid polypeptide reads, in one-letter code: Bifunctional protein FolD 2 (300 aa).

NADP(+)-binding positions include 166–168, S191, and I232; that span reads GRS.

It belongs to the tetrahydrofolate dehydrogenase/cyclohydrolase family. Homodimer.

It catalyses the reaction (6R)-5,10-methylene-5,6,7,8-tetrahydrofolate + NADP(+) = (6R)-5,10-methenyltetrahydrofolate + NADPH. The enzyme catalyses (6R)-5,10-methenyltetrahydrofolate + H2O = (6R)-10-formyltetrahydrofolate + H(+). It functions in the pathway one-carbon metabolism; tetrahydrofolate interconversion. Functionally, catalyzes the oxidation of 5,10-methylenetetrahydrofolate to 5,10-methenyltetrahydrofolate and then the hydrolysis of 5,10-methenyltetrahydrofolate to 10-formyltetrahydrofolate. In Roseobacter denitrificans (strain ATCC 33942 / OCh 114) (Erythrobacter sp. (strain OCh 114)), this protein is Bifunctional protein FolD 2.